Consider the following 133-residue polypeptide: Nucleoside diphosphate kinase (133 aa).

K9, F57, R85, T91, R102, and N112 together coordinate ATP. H115 (pros-phosphohistidine intermediate) is an active-site residue.

It belongs to the NDK family. As to quaternary structure, homotetramer. It depends on Mg(2+) as a cofactor.

The protein resides in the cytoplasm. It carries out the reaction a 2'-deoxyribonucleoside 5'-diphosphate + ATP = a 2'-deoxyribonucleoside 5'-triphosphate + ADP. It catalyses the reaction a ribonucleoside 5'-diphosphate + ATP = a ribonucleoside 5'-triphosphate + ADP. Functionally, major role in the synthesis of nucleoside triphosphates other than ATP. The ATP gamma phosphate is transferred to the NDP beta phosphate via a ping-pong mechanism, using a phosphorylated active-site intermediate. The chain is Nucleoside diphosphate kinase from Rubrobacter xylanophilus (strain DSM 9941 / JCM 11954 / NBRC 16129 / PRD-1).